Reading from the N-terminus, the 754-residue chain is 1,4-alpha-glucan branching enzyme GlgB (754 aa).

The active-site Nucleophile is aspartate 431. The Proton donor role is filled by glutamate 484.

Belongs to the glycosyl hydrolase 13 family. GlgB subfamily. As to quaternary structure, monomer.

It carries out the reaction Transfers a segment of a (1-&gt;4)-alpha-D-glucan chain to a primary hydroxy group in a similar glucan chain.. The protein operates within glycan biosynthesis; glycogen biosynthesis. In terms of biological role, catalyzes the formation of the alpha-1,6-glucosidic linkages in glycogen by scission of a 1,4-alpha-linked oligosaccharide from growing alpha-1,4-glucan chains and the subsequent attachment of the oligosaccharide to the alpha-1,6 position. The sequence is that of 1,4-alpha-glucan branching enzyme GlgB from Prochlorococcus marinus (strain MIT 9301).